A 54-amino-acid chain; its full sequence is uncharacterized protein (54 aa).

Positions 1–54 (MWTLKARKEHTGISGKPTARTDRHGSTRSGDSELQASARRFSRLPDRCGAQGVT) are disordered.

This is an uncharacterized protein from Mycobacterium tuberculosis (strain ATCC 25618 / H37Rv).